Here is a 156-residue protein sequence, read N- to C-terminus: MKIQLVAVGTRMPDWVETGFKEYQRRFPRDMALELVEIPAGKRGKNADIARILQKEGELMLAAIPKGNHIVSLDLPGKNLTTPQLAEQMNKWLLDGRDVSLLIGGPEGLSPECKKAAAQSWCLSALTLPHPLVRVIVAESLYRGWSINNNHPYHRE.

S-adenosyl-L-methionine contacts are provided by residues leucine 73, glycine 104, and 123-128 (LSALTL).

It belongs to the RNA methyltransferase RlmH family. As to quaternary structure, homodimer.

It is found in the cytoplasm. The catalysed reaction is pseudouridine(1915) in 23S rRNA + S-adenosyl-L-methionine = N(3)-methylpseudouridine(1915) in 23S rRNA + S-adenosyl-L-homocysteine + H(+). Functionally, specifically methylates the pseudouridine at position 1915 (m3Psi1915) in 23S rRNA. In Shewanella pealeana (strain ATCC 700345 / ANG-SQ1), this protein is Ribosomal RNA large subunit methyltransferase H.